A 179-amino-acid chain; its full sequence is ECF RNA polymerase sigma factor SigF (179 aa).

Residues 33-93 (RLRAYFMRRM…KLIDHWRRRK (61 aa)) form a sigma-70 factor domain-2 region. Positions 51–64 (DLVQETLLAVHLKR) match the Polymerase core binding motif. Positions 123 to 170 (ALASLPQRQRMLVSDVKLTGLSLAEAGARAGISEGAAKVALHRALKAL) are sigma-70 factor domain-4. The segment at residues 145 to 164 (LAEAGARAGISEGAAKVALH) is a DNA-binding region (H-T-H motif).

The protein belongs to the sigma-70 factor family. ECF subfamily.

The protein localises to the cytoplasm. In terms of biological role, sigma factors are initiation factors that promote the attachment of RNA polymerase to specific initiation sites and are then released. Extracytoplasmic function (ECF) sigma factors are held in an inactive form by a cognate anti-sigma factor (NrsF in this case) until they are released. Up-regulates expression of 4 operons (sigF-nrsF, CCNA_02834, CCNA_03001 to CCNA_02999 and CCNA_03363 to CCNA_03366) in response to potassium dichromate (K(2)Cr(2)O(7)) or cadmium chloride (CdCl(2)). Overexpression of sigF leads to higher expression of its regulon. In Caulobacter vibrioides (strain NA1000 / CB15N) (Caulobacter crescentus), this protein is ECF RNA polymerase sigma factor SigF.